A 329-amino-acid polypeptide reads, in one-letter code: DNA-directed RNA polymerase subunit alpha (329 aa).

The interval 1–235 (MQNSIMDFLR…EQLEAFVDLR (235 aa)) is alpha N-terminal domain (alpha-NTD). Residues 249–329 (FEPILLRPVD…NWPPSSILDE (81 aa)) are alpha C-terminal domain (alpha-CTD).

This sequence belongs to the RNA polymerase alpha chain family. As to quaternary structure, homodimer. The RNAP catalytic core consists of 2 alpha, 1 beta, 1 beta' and 1 omega subunit. When a sigma factor is associated with the core the holoenzyme is formed, which can initiate transcription.

It carries out the reaction RNA(n) + a ribonucleoside 5'-triphosphate = RNA(n+1) + diphosphate. DNA-dependent RNA polymerase catalyzes the transcription of DNA into RNA using the four ribonucleoside triphosphates as substrates. The sequence is that of DNA-directed RNA polymerase subunit alpha from Buchnera aphidicola subsp. Acyrthosiphon pisum (strain APS) (Acyrthosiphon pisum symbiotic bacterium).